The following is a 1169-amino-acid chain: Transcription-repair-coupling factor (1169 aa).

Positions 634–795 (DMERARPMDR…MLGVRDLSVI (162 aa)) constitute a Helicase ATP-binding domain. 647-654 (GDVGYGKT) serves as a coordination point for ATP. Residues 748–751 (DEEQ) carry the DEEQ box motif. In terms of domain architecture, Helicase C-terminal spans 809-970 (VLEQNTNFIK…GFKIAMRDLN (162 aa)).

In the N-terminal section; belongs to the UvrB family. The protein in the C-terminal section; belongs to the helicase family. RecG subfamily.

The protein resides in the cytoplasm. In terms of biological role, couples transcription and DNA repair by recognizing RNA polymerase (RNAP) stalled at DNA lesions. Mediates ATP-dependent release of RNAP and its truncated transcript from the DNA, and recruitment of nucleotide excision repair machinery to the damaged site. This is Transcription-repair-coupling factor from Staphylococcus epidermidis (strain ATCC 12228 / FDA PCI 1200).